A 150-amino-acid chain; its full sequence is Small ribosomal subunit protein uS7cz/uS7cy (150 aa).

It belongs to the universal ribosomal protein uS7 family. As to quaternary structure, part of the 30S ribosomal subunit.

The protein localises to the plastid. It localises to the chloroplast. Its function is as follows. One of the primary rRNA binding proteins, it binds directly to 16S rRNA where it nucleates assembly of the head domain of the 30S subunit. The protein is Small ribosomal subunit protein uS7cz/uS7cy (rps7-A) of Adiantum capillus-veneris (Maidenhair fern).